The primary structure comprises 345 residues: PI-PLC X domain-containing protein 1 (345 aa).

One can recognise a PI-PLC X-box domain in the interval 52 to 228 (QLWDVPLHHL…QVIVSYEDEA (177 aa)).

As to expression, expressed at highest levels in brain and kidney. Also detected in stomach, thymus and skeletal muscle.

Its subcellular location is the cytoplasm. This Mus musculus (Mouse) protein is PI-PLC X domain-containing protein 1 (Plcxd1).